The sequence spans 97 residues: DNA/RNA-binding protein Alba (97 aa).

At Lys-15 the chain carries N6-acetyllysine.

Belongs to the histone-like Alba family. Acetylated. Acetylation at Lys-15 decreases DNA-binding affinity.

It is found in the cytoplasm. It localises to the chromosome. In terms of biological role, binds double-stranded DNA tightly but without sequence specificity. Involved in DNA compaction. This Ignicoccus hospitalis (strain KIN4/I / DSM 18386 / JCM 14125) protein is DNA/RNA-binding protein Alba.